The chain runs to 662 residues: Junctophilin-1 (662 aa).

At 1-640 the chain is on the cytoplasmic side; it reads MTGGRFDFDD…EREANSGPNS (640 aa). MORN repeat units follow at residues 14–36, 38–59, 60–82, 106–128, and 129–151; these read YCGG…KGQG, YSGS…SGNT, YQGY…KWMY, YEGT…DGGT, and YQGQ…PYGM. Ser-157, Ser-216, and Ser-220 each carry phosphoserine. The disordered stretch occupies residues 228–247; it reads SKSSISSKRSSVRSDAAMSR. MORN repeat units lie at residues 281–303 and 304–326; these read YMGE…NGMK and YEGE…DGSK. Residues 432 to 443 show a composition bias toward basic and acidic residues; sequence VDAKENPEEKVP. Residues 432–634 form a disordered region; sequence VDAKENPEEK…DSCPSMEREA (203 aa). Residue Thr-448 is modified to Phosphothreonine. Ser-452 is modified (phosphoserine). Phosphothreonine is present on Thr-461. Phosphoserine occurs at positions 465, 469, and 475. Residues 584 to 599 show a composition bias toward low complexity; it reads KPSPNKWSPPKSVTKP. Basic and acidic residues predominate over residues 600 to 614; the sequence is VAKESKAEPKAKKSE. A helical; Anchor for type IV membrane protein membrane pass occupies residues 641–661; it reads VMIVLVMLLNIGLAILFVHFL.

Belongs to the junctophilin family.

The protein resides in the cell membrane. The protein localises to the endoplasmic reticulum membrane. It is found in the sarcoplasmic reticulum membrane. Junctophilins contribute to the formation of junctional membrane complexes (JMCs) which link the plasma membrane with the endoplasmic or sarcoplasmic reticulum in excitable cells. Provides a structural foundation for functional cross-talk between the cell surface and intracellular calcium release channels. JPH1 contributes to the construction of the skeletal muscle triad by linking the t-tubule (transverse-tubule) and SR (sarcoplasmic reticulum) membranes. The sequence is that of Junctophilin-1 (JPH1) from Oryctolagus cuniculus (Rabbit).